The primary structure comprises 288 residues: Alpha-acetolactate decarboxylase (288 aa).

The signal sequence occupies residues 1 to 23 (MNIKYFLIFLILLAVTSFTLFSG).

It belongs to the alpha-acetolactate decarboxylase family.

The enzyme catalyses (2S)-2-acetolactate + H(+) = (R)-acetoin + CO2. Its pathway is polyol metabolism; (R,R)-butane-2,3-diol biosynthesis; (R,R)-butane-2,3-diol from pyruvate: step 2/3. Functionally, converts acetolactate into acetoin. The chain is Alpha-acetolactate decarboxylase from Methanosarcina mazei (strain ATCC BAA-159 / DSM 3647 / Goe1 / Go1 / JCM 11833 / OCM 88) (Methanosarcina frisia).